Here is a 119-residue protein sequence, read N- to C-terminus: Ribonuclease P protein component (119 aa).

It belongs to the RnpA family. In terms of assembly, consists of a catalytic RNA component (M1 or rnpB) and a protein subunit.

It catalyses the reaction Endonucleolytic cleavage of RNA, removing 5'-extranucleotides from tRNA precursor.. In terms of biological role, RNaseP catalyzes the removal of the 5'-leader sequence from pre-tRNA to produce the mature 5'-terminus. It can also cleave other RNA substrates such as 4.5S RNA. The protein component plays an auxiliary but essential role in vivo by binding to the 5'-leader sequence and broadening the substrate specificity of the ribozyme. The sequence is that of Ribonuclease P protein component from Streptococcus equi subsp. zooepidemicus (strain MGCS10565).